Consider the following 543-residue polypeptide: Carboxypeptidase Y homolog A (543 aa).

A signal peptide spans 1–17 (MKFLTTGLLATAALAAA). Positions 18–124 (QEQHVLQAED…KLHNYDLRVK (107 aa)) are excised as a propeptide. Disulfide bonds link C179–C419, C313–C327, C337–C360, C344–C353, and C382–C389. N210 is a glycosylation site (N-linked (GlcNAc...) asparagine). S266 is a catalytic residue. The active site involves D458. The N-linked (GlcNAc...) asparagine glycan is linked to N509. The active site involves H520.

This sequence belongs to the peptidase S10 family.

It localises to the vacuole. The catalysed reaction is Release of a C-terminal amino acid with broad specificity.. In terms of biological role, vacuolar carboxypeptidase involved in degradation of small peptides. Digests preferentially peptides containing an aliphatic or hydrophobic residue in P1' position, as well as methionine, leucine or phenylalanine in P1 position of ester substrate. The polypeptide is Carboxypeptidase Y homolog A (cpyA) (Trichophyton verrucosum (strain HKI 0517)).